A 222-amino-acid polypeptide reads, in one-letter code: S-crystallin SL20-1 (222 aa).

The 79-residue stretch at 2–80 (PNYTLYYFNG…YLARENGYYG (79 aa)) folds into the GST N-terminal domain. Positions 82–222 (NNMDMFRIDY…YLKKRNNTNW (141 aa)) constitute a GST C-terminal domain.

The protein belongs to the GST superfamily. In terms of tissue distribution, lens.

Functionally, S-crystallins are structural components of squids and octopi eye lens. Contains relatively little if any GST activity. This Nototodarus sloanii (Wellington flying squid) protein is S-crystallin SL20-1.